The following is a 622-amino-acid chain: E3 ubiquitin-protein ligase RNF12-A (622 aa).

Disordered regions lie at residues 1 to 26 (MESADSTGKGSIEQSESQRQSQMDRL), 67 to 386 (RLQQ…ESER), and 473 to 514 (NANA…NSRG). Positions 11–21 (SIEQSESQRQS) are enriched in low complexity. 2 stretches are compositionally biased toward polar residues: residues 110–138 (SVRQTGNTTRSGQRGNQSWRAVSRTNPNS) and 147–163 (INVNRTSGNPSMPSLDQ). Basic and acidic residues predominate over residues 216–242 (RSPDQRRTRARTDRSRSPLHHAVDPPI). The span at 247–256 (HSSSQTVDTS) shows a compositional bias: polar residues. Residues 272–289 (SSQVQNSSSSNETEGSSR) are compositionally biased toward low complexity. Polar residues predominate over residues 300-317 (VLGTEGQSQSTVHLSNPE). A compositionally biased stretch (low complexity) spans 318–331 (TRSSSQTPQTDSST). Residues 332 to 341 (NAETTGTGQR) show a composition bias toward polar residues. The span at 355-365 (RPGDYRQRDSI) shows a compositional bias: basic and acidic residues. Over residues 366-382 (ANRTRSRSQTPNNTVTY) the composition is skewed to polar residues. The RING-type; atypical zinc-finger motif lies at 568 to 609 (CSVCITEYTEGNKLRKLPCSHEYHIHCIDRWLSENSTCPICR). The short motif at 619-622 (ESIV) is the PDZ-binding element.

This sequence belongs to the RNF12 family. Forms homodimers through the C-terminal region. The N-terminus interacts with the homeobox of LIM/homeobox factor lhx1/lim1, with lhx3/lim3 and lhx5/lim5, and with the N-terminus of ldb1. In terms of tissue distribution, shows overlapping expression with lhx1/lim1 and ldb1 in the gastrula mesoderm, and expression overlaps with ldb1 throughout early embryogenesis. After gastrulation, expression is gradually restricted to tissues originated from the ectoderm, the neuroectoderm, neural crest and epidermis, and subsequently to the neural tube as well as the head and tailbud region.

The protein localises to the nucleus. It carries out the reaction S-ubiquitinyl-[E2 ubiquitin-conjugating enzyme]-L-cysteine + [acceptor protein]-L-lysine = [E2 ubiquitin-conjugating enzyme]-L-cysteine + N(6)-ubiquitinyl-[acceptor protein]-L-lysine.. It participates in protein modification; protein ubiquitination. Its function is as follows. Acts as an E3 ubiquitin-protein ligase specific for ldb1, mediating ubiquitination and proteasome-dependent degradation of excess ldb1 in a RING-dependent manner. Does not degrade ldb1 bound to lhx1/lim1, nor lim1 itself and thus contributes to the establishment of proper ldb1-lhx1/lim1 stoichiometry and the formation of a ldb1-lhx1/lim1 complex. Interferes with Spemann organizer function and suppresses secondary axis formation induced by ldb1 and lhx1/lim1. This chain is E3 ubiquitin-protein ligase RNF12-A (rnf12-a), found in Xenopus laevis (African clawed frog).